A 68-amino-acid chain; its full sequence is Phylloseptin-SP1 (68 aa).

The N-terminal stretch at 1–22 (MAFLKKSLFLVLFLGLVSLSIC) is a signal peptide. Residues 23–45 (EEKERETKEEENEQEDDNREEKR) constitute a propeptide that is removed on maturation. L67 carries the leucine amide modification.

As to expression, expressed by the skin glands.

The protein resides in the secreted. Its function is as follows. Weak cationic amphipathic alpha-helical antimicrobial peptide with weak activity against Gram-positive and Gram-negative bacteria and fungi. Has been tested against E.coli (MIC&gt;217.69 uM), S.aureus (MIC&gt;217.69 uM), K.pneumoniae (MIC&gt;189.00 uM) and C.albicans (MIC&gt;217.69 uM). Shows a moderate hemolytic activity. The polypeptide is Phylloseptin-SP1 (Agalychnis spurrelli (Gliding leaf frog)).